The sequence spans 256 residues: MQIKIGEVESKLNEIIEEEGAAYFVLIDPDEKNYRKIANHVKNYADAIIIGGSIGIINLDEVTKEIKEITGLPTILFPGNVDGVTKEADAVLFMSLMNSKNTYWNMTAPTLGALTIKKYGLETLPMAYLGIEPISKTAVGFVGEVNEIPQKKPEIAGIYSLSASYFGMRWVYLEAGSGAEYPVNNEMIGISKKLSGINIIVGGGIRTPEVAYEKVMSGADVIVTGTLTEKDPKAVEEMKKAIKKAGMDKLKMLSKK.

Residues Asp-28 and Ser-53 each contribute to the Mg(2+) site. Sn-glycerol 1-phosphate-binding positions include 172 to 178 (YLEAGSG), 203 to 204 (GG), and 225 to 226 (GT).

It belongs to the GGGP/HepGP synthase family. Group II subfamily. Mg(2+) serves as cofactor.

The protein localises to the cytoplasm. It carries out the reaction sn-glycerol 1-phosphate + (2E,6E,10E)-geranylgeranyl diphosphate = sn-3-O-(geranylgeranyl)glycerol 1-phosphate + diphosphate. Its pathway is membrane lipid metabolism; glycerophospholipid metabolism. Prenyltransferase that catalyzes the transfer of the geranylgeranyl moiety of geranylgeranyl diphosphate (GGPP) to the C3 hydroxyl of sn-glycerol-1-phosphate (G1P). This reaction is the first ether-bond-formation step in the biosynthesis of archaeal membrane lipids. The chain is Geranylgeranylglyceryl phosphate synthase from Methanococcus maripaludis (strain C6 / ATCC BAA-1332).